The primary structure comprises 298 residues: GTP cyclohydrolase FolE2 (298 aa).

The protein belongs to the GTP cyclohydrolase IV family.

The catalysed reaction is GTP + H2O = 7,8-dihydroneopterin 3'-triphosphate + formate + H(+). It participates in cofactor biosynthesis; 7,8-dihydroneopterin triphosphate biosynthesis; 7,8-dihydroneopterin triphosphate from GTP: step 1/1. Functionally, converts GTP to 7,8-dihydroneopterin triphosphate. This is GTP cyclohydrolase FolE2 from Xylella fastidiosa (strain 9a5c).